A 509-amino-acid chain; its full sequence is Surface lipoprotein assembly modifier (509 aa).

An N-terminal signal peptide occupies residues 1–32; that stretch reads MNLMINLKPLTFLPFFGRLVFLSGVIYNTAWA. The tract at residues 33–204 is N-terminal domain; that stretch reads NTVIPVDNSR…SYIDTINQRD (172 aa). The disordered stretch occupies residues 43 to 72; it reads PDETFSQTSPKQHLFSQKPKPTEPTSSASS. Positions 46–57 are enriched in polar residues; sequence TFSQTSPKQHLF. The TPR repeat unit spans residues 120–153; that stretch reads FLLKWAQAVVARKQGKLNESVRLYRQIIAEKPNL. A C-terminal probable beta barrel region spans residues 205-509; it reads SWNVYGGVNY…RIYLTFSKTF (305 aa). 14 beta stranded membrane passes run 206-216, 245-256, 261-270, 284-294, 298-308, 331-341, 345-355, 371-381, 386-395, 408-417, 423-432, 461-470, 476-485, and 499-509; these read WNVYGGVNYLH, LSYFINLSKNWS, FFTEFSADIN, STRLNLGGGYR, TEVKLMPFVEQ, SGINLDVDYWL, WKISTVLEYTE, YSISNTLIYMP, FWFVGLDYYQ, QGIRLGWGQE, STRLQTSYAT, GVNFTIWHRS, ITPKITWAYQ, and NRIYLTFSKTF.

It belongs to the Slam family.

The protein resides in the cell outer membrane. Functionally, required for correct export to the cell surface of some cell outer membrane lipoproteins (tested with PM1514) upon heterologous expression in E.coli and probably also in Pasteurella. The polypeptide is Surface lipoprotein assembly modifier (Pasteurella multocida (strain Pm70)).